The following is a 392-amino-acid chain: 8-amino-7-oxononanoate synthase (392 aa).

Residue R19 participates in substrate binding. Residue 106 to 107 coordinates pyridoxal 5'-phosphate; the sequence is GY. Substrate is bound at residue H131. Pyridoxal 5'-phosphate is bound by residues S176, H204, and T233. The residue at position 236 (K236) is an N6-(pyridoxal phosphate)lysine. A substrate-binding site is contributed by T350.

This sequence belongs to the class-II pyridoxal-phosphate-dependent aminotransferase family. BioF subfamily. In terms of assembly, homodimer. The cofactor is pyridoxal 5'-phosphate.

It catalyses the reaction 6-carboxyhexanoyl-[ACP] + L-alanine + H(+) = (8S)-8-amino-7-oxononanoate + holo-[ACP] + CO2. Its pathway is cofactor biosynthesis; biotin biosynthesis. Its function is as follows. Catalyzes the decarboxylative condensation of pimeloyl-[acyl-carrier protein] and L-alanine to produce 8-amino-7-oxononanoate (AON), [acyl-carrier protein], and carbon dioxide. In Stutzerimonas stutzeri (strain A1501) (Pseudomonas stutzeri), this protein is 8-amino-7-oxononanoate synthase.